The following is an 86-amino-acid chain: Large ribosomal subunit protein bL27 (86 aa).

It belongs to the bacterial ribosomal protein bL27 family.

The chain is Large ribosomal subunit protein bL27 from Koribacter versatilis (strain Ellin345).